Here is a 370-residue protein sequence, read N- to C-terminus: Type II restriction enzyme MjaII (370 aa).

It belongs to the TdeIII type II restriction endonuclease family.

The catalysed reaction is Endonucleolytic cleavage of DNA to give specific double-stranded fragments with terminal 5'-phosphates.. Its function is as follows. A P subtype restriction enzyme that recognizes the double-stranded sequence 5'-GGNCC-3'; the cleavage site is unknown. This is Type II restriction enzyme MjaII (mjaIIR) from Methanocaldococcus jannaschii (strain ATCC 43067 / DSM 2661 / JAL-1 / JCM 10045 / NBRC 100440) (Methanococcus jannaschii).